A 729-amino-acid polypeptide reads, in one-letter code: Fatty acid oxidation complex subunit alpha (729 aa).

Residues 1–189 are enoyl-CoA hydratase/isomerase; that stretch reads MLYKGDTLYL…KIGLVDGVVK (189 aa). Asp296 is a binding site for substrate. Positions 311–729 are 3-hydroxyacyl-CoA dehydrogenase; sequence ETPKQAAVLG…ARPVGSLKTA (419 aa). Residues Met324, Asp343, 400 to 402, Lys407, and Ser429 each bind NAD(+); that span reads VVE. The active-site For 3-hydroxyacyl-CoA dehydrogenase activity is the His450. Asn453 is an NAD(+) binding site. The substrate site is built by Asn500 and Tyr660. The tract at residues 707–729 is disordered; it reads TRHNEPYYPPVEPARPVGSLKTA.

The protein in the N-terminal section; belongs to the enoyl-CoA hydratase/isomerase family. This sequence in the C-terminal section; belongs to the 3-hydroxyacyl-CoA dehydrogenase family. As to quaternary structure, heterotetramer of two alpha chains (FadB) and two beta chains (FadA).

It catalyses the reaction a (3S)-3-hydroxyacyl-CoA + NAD(+) = a 3-oxoacyl-CoA + NADH + H(+). The enzyme catalyses a (3S)-3-hydroxyacyl-CoA = a (2E)-enoyl-CoA + H2O. The catalysed reaction is a 4-saturated-(3S)-3-hydroxyacyl-CoA = a (3E)-enoyl-CoA + H2O. It carries out the reaction (3S)-3-hydroxybutanoyl-CoA = (3R)-3-hydroxybutanoyl-CoA. It catalyses the reaction a (3Z)-enoyl-CoA = a 4-saturated (2E)-enoyl-CoA. The enzyme catalyses a (3E)-enoyl-CoA = a 4-saturated (2E)-enoyl-CoA. It participates in lipid metabolism; fatty acid beta-oxidation. Functionally, involved in the aerobic and anaerobic degradation of long-chain fatty acids via beta-oxidation cycle. Catalyzes the formation of 3-oxoacyl-CoA from enoyl-CoA via L-3-hydroxyacyl-CoA. It can also use D-3-hydroxyacyl-CoA and cis-3-enoyl-CoA as substrate. This is Fatty acid oxidation complex subunit alpha from Salmonella typhi.